The chain runs to 62 residues: Large ribosomal subunit protein uL29 (62 aa).

The protein belongs to the universal ribosomal protein uL29 family.

The sequence is that of Large ribosomal subunit protein uL29 from Vesicomyosocius okutanii subsp. Calyptogena okutanii (strain HA).